Here is a 168-residue protein sequence, read N- to C-terminus: 2-C-methyl-D-erythritol 2,4-cyclodiphosphate synthase (168 aa).

Residues aspartate 11 and histidine 13 each contribute to the a divalent metal cation site. Residues 11 to 13 (DVH) and 38 to 39 (HS) contribute to the 4-CDP-2-C-methyl-D-erythritol 2-phosphate site. Histidine 46 is an a divalent metal cation binding site. Residues 60-62 (DIG), 133-136 (TTTD), phenylalanine 140, and arginine 143 contribute to the 4-CDP-2-C-methyl-D-erythritol 2-phosphate site.

It belongs to the IspF family. Homotrimer. The cofactor is a divalent metal cation.

It carries out the reaction 4-CDP-2-C-methyl-D-erythritol 2-phosphate = 2-C-methyl-D-erythritol 2,4-cyclic diphosphate + CMP. It functions in the pathway isoprenoid biosynthesis; isopentenyl diphosphate biosynthesis via DXP pathway; isopentenyl diphosphate from 1-deoxy-D-xylulose 5-phosphate: step 4/6. Its function is as follows. Involved in the biosynthesis of isopentenyl diphosphate (IPP) and dimethylallyl diphosphate (DMAPP), two major building blocks of isoprenoid compounds. Catalyzes the conversion of 4-diphosphocytidyl-2-C-methyl-D-erythritol 2-phosphate (CDP-ME2P) to 2-C-methyl-D-erythritol 2,4-cyclodiphosphate (ME-CPP) with a corresponding release of cytidine 5-monophosphate (CMP). In Cutibacterium acnes (strain DSM 16379 / KPA171202) (Propionibacterium acnes), this protein is 2-C-methyl-D-erythritol 2,4-cyclodiphosphate synthase.